The chain runs to 243 residues: LexA repressor 2 (243 aa).

The segment at residues Ile48–Arg68 is a DNA-binding region (H-T-H motif). Active-site for autocatalytic cleavage activity residues include Ser167 and Lys204.

This sequence belongs to the peptidase S24 family. Homodimer.

The catalysed reaction is Hydrolysis of Ala-|-Gly bond in repressor LexA.. Its function is as follows. Represses a number of genes involved in the response to DNA damage (SOS response), including recA and lexA. In the presence of single-stranded DNA, RecA interacts with LexA causing an autocatalytic cleavage which disrupts the DNA-binding part of LexA, leading to derepression of the SOS regulon and eventually DNA repair. This is LexA repressor 2 from Nocardia farcinica (strain IFM 10152).